Reading from the N-terminus, the 257-residue chain is tRNA (guanine-N(7)-)-methyltransferase (257 aa).

The disordered stretch occupies residues 1–58; the sequence is MQPIEQPGTGPDDITPESQDTNTAESAESGAETGHPRRIRSFVRRAGRTSTGQQRAIN. Positions 16–26 are enriched in polar residues; the sequence is PESQDTNTAES. The segment covering 36–47 has biased composition (basic residues); the sequence is PRRIRSFVRRAG. The S-adenosyl-L-methionine site is built by Glu89, Glu114, Asp141, and Asp164. Asp164 is a catalytic residue. Substrate is bound at residue Lys168. An interaction with RNA region spans residues 170 to 175; the sequence is RHNKRR. Substrate is bound by residues Asp200 and 235–238; that span reads TKFE.

This sequence belongs to the class I-like SAM-binding methyltransferase superfamily. TrmB family.

It carries out the reaction guanosine(46) in tRNA + S-adenosyl-L-methionine = N(7)-methylguanosine(46) in tRNA + S-adenosyl-L-homocysteine. The protein operates within tRNA modification; N(7)-methylguanine-tRNA biosynthesis. Catalyzes the formation of N(7)-methylguanine at position 46 (m7G46) in tRNA. This is tRNA (guanine-N(7)-)-methyltransferase from Ralstonia pickettii (strain 12J).